Reading from the N-terminus, the 55-residue chain is ATP synthase protein 8 (55 aa).

The chain crosses the membrane as a helical span at residues 6 to 26 (PHPWFAILVFSWIFFLVILPK).

The protein belongs to the ATPase protein 8 family. As to quaternary structure, F-type ATPases have 2 components, CF(1) - the catalytic core - and CF(0) - the membrane proton channel.

Its subcellular location is the mitochondrion membrane. In terms of biological role, mitochondrial membrane ATP synthase (F(1)F(0) ATP synthase or Complex V) produces ATP from ADP in the presence of a proton gradient across the membrane which is generated by electron transport complexes of the respiratory chain. F-type ATPases consist of two structural domains, F(1) - containing the extramembraneous catalytic core and F(0) - containing the membrane proton channel, linked together by a central stalk and a peripheral stalk. During catalysis, ATP synthesis in the catalytic domain of F(1) is coupled via a rotary mechanism of the central stalk subunits to proton translocation. Part of the complex F(0) domain. Minor subunit located with subunit a in the membrane. The polypeptide is ATP synthase protein 8 (MT-ATP8) (Squalus acanthias (Spiny dogfish)).